We begin with the raw amino-acid sequence, 139 residues long: Transcription antitermination protein NusB (139 aa).

Belongs to the NusB family.

Involved in transcription antitermination. Required for transcription of ribosomal RNA (rRNA) genes. Binds specifically to the boxA antiterminator sequence of the ribosomal RNA (rrn) operons. The polypeptide is Transcription antitermination protein NusB (Limosilactobacillus fermentum (strain NBRC 3956 / LMG 18251) (Lactobacillus fermentum)).